The primary structure comprises 184 residues: Heme transporter hrg-4 (184 aa).

The chain crosses the membrane as a helical span at residues 19 to 39 (IGWTIFGIVFGISAILTYAIK). N-linked (GlcNAc...) asparagine glycosylation is present at N42. A run of 3 helical transmembrane segments spans residues 46–66 (TATT…YWAL), 87–107 (VFIG…AGIT), and 124–146 (IYFS…WSLV).

It belongs to the HRG family.

It is found in the cell membrane. Heme transporter that mediates heme uptake across the plasma membrane. The sequence is that of Heme transporter hrg-4 from Caenorhabditis elegans.